A 382-amino-acid chain; its full sequence is Mitogen-activated protein kinase 9 (382 aa).

The 296-residue stretch at 26 to 321 (YQQLKPIGSG…VDEALRHPYI (296 aa)) folds into the Protein kinase domain. ATP is bound by residues 33 to 38 (GSGAQG) and Lys-55. Asp-151 functions as the Proton acceptor in the catalytic mechanism. A Phosphothreonine modification is found at Thr-183. Positions 183 to 185 (TPY) match the TXY motif. Residue Tyr-185 is modified to Phosphotyrosine.

Belongs to the protein kinase superfamily. CMGC Ser/Thr protein kinase family. MAP kinase subfamily. Mg(2+) is required as a cofactor. Post-translationally, dually phosphorylated on Thr-183 and Tyr-185, which activates the enzyme. As to expression, expressed in the neuroepithelium of developing brain at stages 16 to 26.

It carries out the reaction L-seryl-[protein] + ATP = O-phospho-L-seryl-[protein] + ADP + H(+). It catalyses the reaction L-threonyl-[protein] + ATP = O-phospho-L-threonyl-[protein] + ADP + H(+). With respect to regulation, activated by threonine and tyrosine phosphorylation. Its function is as follows. Responds to activation by environmental stress and pro-inflammatory cytokines by phosphorylating a number of transcription factors, primarily components of AP-1 such as JUN and ATF2 and thus regulates AP-1 transcriptional activity. May play a role in the development of the central nervous system during embryogenesis. May play a role in the regulation of the circadian clock. The protein is Mitogen-activated protein kinase 9 (MAPK9) of Gallus gallus (Chicken).